The chain runs to 372 residues: Heat shock 70 kDa protein II (372 aa).

The protein belongs to the heat shock protein 70 family.

This Paracentrotus lividus (Common sea urchin) protein is Heat shock 70 kDa protein II (HSP70II).